A 405-amino-acid polypeptide reads, in one-letter code: Phosphopentomutase (405 aa).

6 residues coordinate Mn(2+): D10, D297, H302, D338, H339, and H350.

The protein belongs to the phosphopentomutase family. It depends on Mn(2+) as a cofactor.

It is found in the cytoplasm. The catalysed reaction is 2-deoxy-alpha-D-ribose 1-phosphate = 2-deoxy-D-ribose 5-phosphate. It carries out the reaction alpha-D-ribose 1-phosphate = D-ribose 5-phosphate. It participates in carbohydrate degradation; 2-deoxy-D-ribose 1-phosphate degradation; D-glyceraldehyde 3-phosphate and acetaldehyde from 2-deoxy-alpha-D-ribose 1-phosphate: step 1/2. Its function is as follows. Isomerase that catalyzes the conversion of deoxy-ribose 1-phosphate (dRib-1-P) and ribose 1-phosphate (Rib-1-P) to deoxy-ribose 5-phosphate (dRib-5-P) and ribose 5-phosphate (Rib-5-P), respectively. The sequence is that of Phosphopentomutase from Pseudoalteromonas translucida (strain TAC 125).